The chain runs to 248 residues: D-xylose 1-dehydrogenase (248 aa).

NAD(+)-binding residues include aspartate 42, aspartate 68, asparagine 91, tyrosine 156, lysine 160, valine 189, and threonine 191. Tyrosine 156 functions as the Proton acceptor in the catalytic mechanism.

It belongs to the short-chain dehydrogenases/reductases (SDR) family.

It catalyses the reaction D-xylose + NAD(+) = D-xylono-1,5-lactone + NADH + H(+). In terms of biological role, involved in the degradation of D-xylose. Catalyzes the initial reaction in the xylose utilization pathway by oxydizing D-xylose into D-xylonolactone. Shows some activity with L-arabinose and D-lyxose, but D-xylose is clearly the best substrate. Has no activity with D-ribose, D-glucose, D-galactose or D-mannose. This is D-xylose 1-dehydrogenase from Caulobacter vibrioides (strain ATCC 19089 / CIP 103742 / CB 15) (Caulobacter crescentus).